An 801-amino-acid chain; its full sequence is Palmitoyl thioesterase CPT1C (801 aa).

At 1–49 (MAEAHQASSLLSSLSSDGAEVELSSSVWQEIYLSALRSWKRNLWRVWND) the chain is on the cytoplasmic side. A helical transmembrane segment spans residues 50 to 70 (FLAGVVPATPLSWLFLFSTIQ). Over 71–103 (LACLLQLDPSLGLMEKIKELLPDWGGQHHQLQG) the chain is Mitochondrial intermembrane. A helical membrane pass occupies residues 104 to 124 (LLAAAVFASCLWGTLIFTLHV). Over 125 to 801 (ALRLLLSHHG…PNIPKSSTNL (677 aa)) the chain is Cytoplasmic. His-469 (proton acceptor) is an active-site residue. 551–563 (GKSFIKGCHVSSD) is a binding site for CoA. Residues Tyr-585, Ser-587, and Thr-598 each coordinate (R)-carnitine. The required for interaction with GRIA1 stretch occupies residues 760–801 (LFQAGQQFKRQFTGLGESSGWKYSNLSCKTVDPNIPKSSTNL).

The protein belongs to the carnitine/choline acetyltransferase family. In terms of assembly, peripherally associated with AMPAR complex. AMPAR complex consists of an inner core made of 4 pore-forming GluA/GRIA proteins (GRIA1, GRIA2, GRIA3 and GRIA4) and 4 major auxiliary subunits arranged in a twofold symmetry. One of the two pairs of distinct binding sites is occupied either by CNIH2, CNIH3 or CACNG2, CACNG3. The other harbors CACNG2, CACNG3, CACNG4, CACNG8 or GSG1L. This inner core of AMPAR complex is complemented by outer core constituents binding directly to the GluA/GRIA proteins at sites distinct from the interaction sites of the inner core constituents. Outer core constituents include at least PRRT1, PRRT2, CKAMP44/SHISA9, FRRS1L and NRN1. The proteins of the inner and outer core serve as a platform for other, more peripherally associated AMPAR constituents, including CPT1C. Alone or in combination, these auxiliary subunits control the gating and pharmacology of the AMPAR complex and profoundly impact their biogenesis and protein processing. Interacts with SACM1L; the interaction regulates SACM1L phosphatidylinositol-3-phosphatase activity and translocation to endoplasmic reticulum/trans Golgi network in a malonyl-CoA dependent manner. Interacts with ATL1. As to expression, expressed in brain (at protein level).

It is found in the synapse. It localises to the cell projection. The protein localises to the dendrite. Its subcellular location is the axon. The protein resides in the endoplasmic reticulum membrane. It carries out the reaction S-hexadecanoyl-L-cysteinyl-[protein] + H2O = L-cysteinyl-[protein] + hexadecanoate + H(+). In terms of biological role, palmitoyl thioesterase specifically expressed in the endoplasmic reticulum of neurons. Modulates the trafficking of the glutamate receptor, AMPAR, to plasma membrane through depalmitoylation of GRIA1. Also regulates AMPR trafficking through the regulation of SACM1L phosphatidylinositol-3-phosphatase activity by interaction in a malonyl-CoA dependent manner. Binds malonyl-CoA and couples malonyl-CoA to ceramide levels, necessary for proper spine maturation and contributing to systemic energy homeostasis and appetite control. Binds to palmitoyl-CoA, but does not have carnitine palmitoyltransferase 1 catalytic activity or at very low levels. This is Palmitoyl thioesterase CPT1C (Cpt1c) from Rattus norvegicus (Rat).